Consider the following 574-residue polypeptide: Desiccation/radiation resistance protein DR_1769 (574 aa).

Positions 1–33 (MPDPAARRFSLPPFPLAALALSVALLGAPASLA) are cleaved as a signal peptide. Residues 400 to 438 (TAQTQARQAAAAASTSQQPRLPTLAQAPAPTPAPAQTTP) are compositionally biased toward low complexity. Residues 400–461 (TAQTQARQAA…APVPPVASPA (62 aa)) are disordered. A compositionally biased stretch (pro residues) spans 439-459 (RPQPTPAQPATPAAPVPPVAS).

In terms of biological role, plays an important role in resistance to desiccation and radiation, maybe by protecting genome integrity under extreme conditions. The protein is Desiccation/radiation resistance protein DR_1769 of Deinococcus radiodurans (strain ATCC 13939 / DSM 20539 / JCM 16871 / CCUG 27074 / LMG 4051 / NBRC 15346 / NCIMB 9279 / VKM B-1422 / R1).